The sequence spans 513 residues: Putative ribose/galactose/methyl galactoside import ATP-binding protein 2 (513 aa).

2 consecutive ABC transporter domains span residues 24 to 260 (LTAE…VGRE) and 270 to 510 (VPIG…VMEL). 56–63 (GENGAGKS) is a binding site for ATP.

This sequence belongs to the ABC transporter superfamily. Carbohydrate importer 2 (CUT2) (TC 3.A.1.2) family.

It localises to the cell inner membrane. It carries out the reaction D-ribose(out) + ATP + H2O = D-ribose(in) + ADP + phosphate + H(+). The catalysed reaction is D-galactose(out) + ATP + H2O = D-galactose(in) + ADP + phosphate + H(+). Its function is as follows. Part of an ABC transporter complex involved in carbohydrate import. Could be involved in ribose, galactose and/or methyl galactoside import. Responsible for energy coupling to the transport system. This chain is Putative ribose/galactose/methyl galactoside import ATP-binding protein 2, found in Rhizobium meliloti (strain 1021) (Ensifer meliloti).